The sequence spans 234 residues: 1-(5-phosphoribosyl)-5-[(5-phosphoribosylamino)methylideneamino] imidazole-4-carboxamide isomerase (234 aa).

Aspartate 9 (proton acceptor) is an active-site residue. Aspartate 131 serves as the catalytic Proton donor.

The protein belongs to the HisA/HisF family.

It is found in the cytoplasm. The catalysed reaction is 1-(5-phospho-beta-D-ribosyl)-5-[(5-phospho-beta-D-ribosylamino)methylideneamino]imidazole-4-carboxamide = 5-[(5-phospho-1-deoxy-D-ribulos-1-ylimino)methylamino]-1-(5-phospho-beta-D-ribosyl)imidazole-4-carboxamide. It functions in the pathway amino-acid biosynthesis; L-histidine biosynthesis; L-histidine from 5-phospho-alpha-D-ribose 1-diphosphate: step 4/9. The protein is 1-(5-phosphoribosyl)-5-[(5-phosphoribosylamino)methylideneamino] imidazole-4-carboxamide isomerase of Staphylococcus carnosus (strain TM300).